The primary structure comprises 64 residues: UPF0337 protein SH2043 (64 aa).

The interval 1–64 is disordered; the sequence is MAEDKFEQAK…DKVKGNNDNK (64 aa). The segment covering 22–64 has biased composition (basic and acidic residues); the sequence is DNKDLEKEGQNDKASGKAKEAVENVKNKANDLIDKVKGNNDNK.

This sequence belongs to the UPF0337 (CsbD) family.

This Staphylococcus haemolyticus (strain JCSC1435) protein is UPF0337 protein SH2043.